The chain runs to 261 residues: Succinate dehydrogenase iron-sulfur subunit (261 aa).

The region spanning 28–119 (RKVKVYRYDP…DIKIYPLPHM (92 aa)) is the 2Fe-2S ferredoxin-type domain. [2Fe-2S] cluster-binding residues include Cys80, Cys85, and Cys100. Residues 161–191 (DREKLDGLYECILCACCSTSCPSYWWNGDKY) form the 4Fe-4S ferredoxin-type domain. [4Fe-4S] cluster is bound by residues Cys171, Cys174, and Cys177. Cys181 contributes to the [3Fe-4S] cluster binding site. Trp186 contributes to the a ubiquinone binding site. Cys228 and Cys234 together coordinate [3Fe-4S] cluster. Cys238 contributes to the [4Fe-4S] cluster binding site.

The protein belongs to the succinate dehydrogenase/fumarate reductase iron-sulfur protein family. In terms of assembly, part of an enzyme complex containing four subunits: a flavoprotein, an iron-sulfur, cytochrome b-556, and a hydrophobic anchor protein. [2Fe-2S] cluster is required as a cofactor. It depends on [3Fe-4S] cluster as a cofactor. [4Fe-4S] cluster serves as cofactor.

It carries out the reaction a quinone + succinate = fumarate + a quinol. Its pathway is carbohydrate metabolism; tricarboxylic acid cycle; fumarate from succinate (bacterial route): step 1/1. In Rickettsia prowazekii (strain Madrid E), this protein is Succinate dehydrogenase iron-sulfur subunit (sdhB).